The chain runs to 387 residues: MELNTLKSTFINNFGKEPNSLFFSPGRINLIGEHIDYNGGFVFPCPITLGTFAAATLRDDRICRAYSLNFESLGVIEFSLDDLSYKKEDNWTNYLKGVLKVLIEKGYKIDKGIDLVINGNLPNGAGLSSSASLEMLIVKILDTFFSLNISKVDAALIGKEVENTYIGVNSGIMDQFAISLGEKDKAILLDCNSLYYEYVPLNLGDNSIIIMNTNKRRELADSKYNERRKECDDSLDTLKKYTNISSLCELTSLEFETYKDKIEDSNKLRRCVHAISENERVKDAVKALKENNLELFGQLMNQSHISLRDDYEVTGKELDTLAENAWKQPGVLGARMTGAGFGGCAIAIVNNNHVDEFIKNVGQAYKDAIGYEASFYVASIGNGPTEL.

33–36 provides a ligand contact to substrate; sequence EHID. ATP-binding positions include S67 and 124-130; that span reads GAGLSSS. Mg(2+)-binding residues include S130 and E162. D174 serves as the catalytic Proton acceptor. Y224 contributes to the substrate binding site.

It belongs to the GHMP kinase family. GalK subfamily.

Its subcellular location is the cytoplasm. The enzyme catalyses alpha-D-galactose + ATP = alpha-D-galactose 1-phosphate + ADP + H(+). The protein operates within carbohydrate metabolism; galactose metabolism. In terms of biological role, catalyzes the transfer of the gamma-phosphate of ATP to D-galactose to form alpha-D-galactose-1-phosphate (Gal-1-P). In Clostridium perfringens (strain SM101 / Type A), this protein is Galactokinase.